A 378-amino-acid polypeptide reads, in one-letter code: Queuine tRNA-ribosyltransferase (378 aa).

D91 (proton acceptor) is an active-site residue. Substrate contacts are provided by residues 91–95 (DSGGF), D145, Q189, and G216. The tract at residues 247 to 253 (GVGKPED) is RNA binding. The Nucleophile role is filled by D266. Residues 271–275 (TRNAR) form an RNA binding; important for wobble base 34 recognition region. Zn(2+) contacts are provided by C304, C306, C309, and H335.

It belongs to the queuine tRNA-ribosyltransferase family. Homodimer. Within each dimer, one monomer is responsible for RNA recognition and catalysis, while the other monomer binds to the replacement base PreQ1. Requires Zn(2+) as cofactor.

The enzyme catalyses 7-aminomethyl-7-carbaguanine + guanosine(34) in tRNA = 7-aminomethyl-7-carbaguanosine(34) in tRNA + guanine. The protein operates within tRNA modification; tRNA-queuosine biosynthesis. Functionally, catalyzes the base-exchange of a guanine (G) residue with the queuine precursor 7-aminomethyl-7-deazaguanine (PreQ1) at position 34 (anticodon wobble position) in tRNAs with GU(N) anticodons (tRNA-Asp, -Asn, -His and -Tyr). Catalysis occurs through a double-displacement mechanism. The nucleophile active site attacks the C1' of nucleotide 34 to detach the guanine base from the RNA, forming a covalent enzyme-RNA intermediate. The proton acceptor active site deprotonates the incoming PreQ1, allowing a nucleophilic attack on the C1' of the ribose to form the product. After dissociation, two additional enzymatic reactions on the tRNA convert PreQ1 to queuine (Q), resulting in the hypermodified nucleoside queuosine (7-(((4,5-cis-dihydroxy-2-cyclopenten-1-yl)amino)methyl)-7-deazaguanosine). The chain is Queuine tRNA-ribosyltransferase from Vibrio campbellii (strain ATCC BAA-1116).